The following is a 107-amino-acid chain: Phosphoribosyl-ATP pyrophosphatase (107 aa).

The protein belongs to the PRA-PH family.

The protein localises to the cytoplasm. It catalyses the reaction 1-(5-phospho-beta-D-ribosyl)-ATP + H2O = 1-(5-phospho-beta-D-ribosyl)-5'-AMP + diphosphate + H(+). The protein operates within amino-acid biosynthesis; L-histidine biosynthesis; L-histidine from 5-phospho-alpha-D-ribose 1-diphosphate: step 2/9. The sequence is that of Phosphoribosyl-ATP pyrophosphatase from Bacillus cytotoxicus (strain DSM 22905 / CIP 110041 / 391-98 / NVH 391-98).